Reading from the N-terminus, the 227-residue chain is Lipoprotein-releasing system ATP-binding protein LolD (227 aa).

In terms of domain architecture, ABC transporter spans 5 to 227; sequence LICQNITKHY…QDGILRESNS (223 aa). 41-48 is an ATP binding site; the sequence is GSSGSGKS.

It belongs to the ABC transporter superfamily. Lipoprotein translocase (TC 3.A.1.125) family. The complex is composed of two ATP-binding proteins (LolD) and two transmembrane proteins (LolC and LolE).

The protein resides in the cell inner membrane. In terms of biological role, part of the ABC transporter complex LolCDE involved in the translocation of mature outer membrane-directed lipoproteins, from the inner membrane to the periplasmic chaperone, LolA. Responsible for the formation of the LolA-lipoprotein complex in an ATP-dependent manner. In Histophilus somni (strain 129Pt) (Haemophilus somnus), this protein is Lipoprotein-releasing system ATP-binding protein LolD.